Reading from the N-terminus, the 556-residue chain is Genetic interactor of prohibitins 3, mitochondrial (556 aa).

Residues 1–21 constitute a mitochondrion transit peptide; that stretch reads MLNLCHALRGVRQFSCSVIVK. Positions 113-305 constitute a CP-type G domain; the sequence is ESTLNDILNY…LFDLPGYSTS (193 aa).

It belongs to the TRAFAC class YlqF/YawG GTPase family. GEP3 subfamily.

It localises to the mitochondrion. Its function is as follows. Interacts genetically with prohibitins and thus may be involved in the mitochondrial lipid metabolism. The chain is Genetic interactor of prohibitins 3, mitochondrial (GEP3) from Saccharomyces cerevisiae (strain YJM789) (Baker's yeast).